Consider the following 147-residue polypeptide: Ribonuclease 4 (147 aa).

Residues 1 to 28 form the signal peptide; it reads MDIQRTQSLLLLLLLTLLGLGLVQPSYG. Gln29 is subject to Pyrrolidone carboxylic acid. The dUMP site is built by Arg35, His40, Lys68, Asn71, and Thr72. Catalysis depends on His40, which acts as the Proton acceptor. Disulfide bonds link Cys53–Cys109, Cys67–Cys120, Cys85–Cys135, and Cys92–Cys99. Catalysis depends on His144, which acts as the Proton donor. Phe145 contributes to the dUMP binding site.

Belongs to the pancreatic ribonuclease family.

The protein resides in the secreted. In terms of biological role, cleaves preferentially after uridine bases. Has antimicrobial activity against uropathogenic E.coli (UPEC). Probably contributes to urinary tract sterility. The sequence is that of Ribonuclease 4 (Rnase4) from Rattus norvegicus (Rat).